The chain runs to 376 residues: Chaperone protein DnaJ (376 aa).

Positions 5–70 (DYYEILGVSK…QKRAAYDQYG (66 aa)) constitute a J domain. Residues 131-209 (GVTKEIRIPT…CHGHGRVERS (79 aa)) form a CR-type zinc finger. The Zn(2+) site is built by Cys-144, Cys-147, Cys-161, Cys-164, Cys-183, Cys-186, Cys-197, and Cys-200. CXXCXGXG motif repeat units follow at residues 144 to 151 (CDVCHGSG), 161 to 168 (CPTCHGSG), 183 to 190 (CPHCQGRG), and 197 to 204 (CNKCHGHG).

Belongs to the DnaJ family. In terms of assembly, homodimer. Zn(2+) is required as a cofactor.

The protein localises to the cytoplasm. Functionally, participates actively in the response to hyperosmotic and heat shock by preventing the aggregation of stress-denatured proteins and by disaggregating proteins, also in an autonomous, DnaK-independent fashion. Unfolded proteins bind initially to DnaJ; upon interaction with the DnaJ-bound protein, DnaK hydrolyzes its bound ATP, resulting in the formation of a stable complex. GrpE releases ADP from DnaK; ATP binding to DnaK triggers the release of the substrate protein, thus completing the reaction cycle. Several rounds of ATP-dependent interactions between DnaJ, DnaK and GrpE are required for fully efficient folding. Also involved, together with DnaK and GrpE, in the DNA replication of plasmids through activation of initiation proteins. This is Chaperone protein DnaJ from Shigella boydii serotype 18 (strain CDC 3083-94 / BS512).